The sequence spans 121 residues: U15-barytoxin-Tl1a (121 aa).

The signal sequence occupies residues Met-1–Ala-17. 4 disulfides stabilise this stretch: Cys-56–Cys-74, Cys-67–Cys-80, Cys-71–Cys-119, and Cys-73–Cys-90.

This sequence belongs to the neurotoxin 03 (Tx2) family. 03 subfamily. As to expression, expressed by the venom gland.

It is found in the secreted. In terms of biological role, ion channel inhibitor. This is U15-barytoxin-Tl1a from Trittame loki (Brush-footed trapdoor spider).